Consider the following 32-residue polypeptide: Photosystem II reaction center protein T (32 aa).

A helical membrane pass occupies residues 3 to 23 (ALVYTFLLVATLGIIFFAIFF).

Belongs to the PsbT family. PSII is composed of 1 copy each of membrane proteins PsbA, PsbB, PsbC, PsbD, PsbE, PsbF, PsbH, PsbI, PsbJ, PsbK, PsbL, PsbM, PsbT, PsbY, PsbZ, Psb30/Ycf12, at least 3 peripheral proteins of the oxygen-evolving complex and a large number of cofactors. It forms dimeric complexes.

It localises to the plastid. The protein resides in the chloroplast thylakoid membrane. Found at the monomer-monomer interface of the photosystem II (PS II) dimer, plays a role in assembly and dimerization of PSII. PSII is a light-driven water plastoquinone oxidoreductase, using light energy to abstract electrons from H(2)O, generating a proton gradient subsequently used for ATP formation. This chain is Photosystem II reaction center protein T, found in Psilotum nudum (Whisk fern).